Here is a 470-residue protein sequence, read N- to C-terminus: 3-isopropylmalate dehydratase large subunit (470 aa).

Residues 50 to 121 (NVARGCQHRH…PCGRPGAGRH (72 aa)) form a disordered region. 3 residues coordinate [4Fe-4S] cluster: Cys-349, Cys-409, and Cys-412.

The protein belongs to the aconitase/IPM isomerase family. LeuC type 1 subfamily. In terms of assembly, heterodimer of LeuC and LeuD. Requires [4Fe-4S] cluster as cofactor.

It carries out the reaction (2R,3S)-3-isopropylmalate = (2S)-2-isopropylmalate. It functions in the pathway amino-acid biosynthesis; L-leucine biosynthesis; L-leucine from 3-methyl-2-oxobutanoate: step 2/4. Functionally, catalyzes the isomerization between 2-isopropylmalate and 3-isopropylmalate, via the formation of 2-isopropylmaleate. The chain is 3-isopropylmalate dehydratase large subunit from Azotobacter vinelandii.